We begin with the raw amino-acid sequence, 200 residues long: Snake venom metalloproteinase rhomb-I (200 aa).

Positions 4–200 constitute a Peptidase M12B domain; the sequence is KYIELVVVAD…RKPQCILNKP (197 aa). Ca(2+)-binding residues include E7 and D91. 3 cysteine pairs are disulfide-bonded: C115-C195, C155-C179, and C157-C162. A Zn(2+)-binding site is contributed by H140. E141 is a catalytic residue. Residues H144 and H150 each contribute to the Zn(2+) site. The Ca(2+) site is built by C195 and N198.

In terms of assembly, monomer. Requires Zn(2+) as cofactor. Expressed by the venom gland.

The protein localises to the secreted. Its function is as follows. Snake venom zinc metalloproteinase that induces hemorrhage. This is Snake venom metalloproteinase rhomb-I from Lachesis muta rhombeata (Bushmaster).